A 325-amino-acid chain; its full sequence is tRNA dimethylallyltransferase (325 aa).

Residue 11-18 (GPTASGKS) coordinates ATP. 13–18 (TASGKS) contacts substrate. Interaction with substrate tRNA stretches follow at residues 36-39 (DSMQ) and 160-164 (QRLIR).

The protein belongs to the IPP transferase family. Monomer. Mg(2+) serves as cofactor.

The enzyme catalyses adenosine(37) in tRNA + dimethylallyl diphosphate = N(6)-dimethylallyladenosine(37) in tRNA + diphosphate. Its function is as follows. Catalyzes the transfer of a dimethylallyl group onto the adenine at position 37 in tRNAs that read codons beginning with uridine, leading to the formation of N6-(dimethylallyl)adenosine (i(6)A). This Rickettsia canadensis (strain McKiel) protein is tRNA dimethylallyltransferase.